A 355-amino-acid polypeptide reads, in one-letter code: UDP-N-acetylglucosamine--N-acetylmuramyl-(pentapeptide) pyrophosphoryl-undecaprenol N-acetylglucosamine transferase (355 aa).

Residues 12–14 (TGG), Asn124, Arg163, Ser191, Ile243, 262–267 (ALTVAE), and Gln288 contribute to the UDP-N-acetyl-alpha-D-glucosamine site.

The protein belongs to the glycosyltransferase 28 family. MurG subfamily.

Its subcellular location is the cell inner membrane. It carries out the reaction di-trans,octa-cis-undecaprenyl diphospho-N-acetyl-alpha-D-muramoyl-L-alanyl-D-glutamyl-meso-2,6-diaminopimeloyl-D-alanyl-D-alanine + UDP-N-acetyl-alpha-D-glucosamine = di-trans,octa-cis-undecaprenyl diphospho-[N-acetyl-alpha-D-glucosaminyl-(1-&gt;4)]-N-acetyl-alpha-D-muramoyl-L-alanyl-D-glutamyl-meso-2,6-diaminopimeloyl-D-alanyl-D-alanine + UDP + H(+). The protein operates within cell wall biogenesis; peptidoglycan biosynthesis. Cell wall formation. Catalyzes the transfer of a GlcNAc subunit on undecaprenyl-pyrophosphoryl-MurNAc-pentapeptide (lipid intermediate I) to form undecaprenyl-pyrophosphoryl-MurNAc-(pentapeptide)GlcNAc (lipid intermediate II). The polypeptide is UDP-N-acetylglucosamine--N-acetylmuramyl-(pentapeptide) pyrophosphoryl-undecaprenol N-acetylglucosamine transferase (Tolumonas auensis (strain DSM 9187 / NBRC 110442 / TA 4)).